We begin with the raw amino-acid sequence, 824 residues long: Leucine--tRNA ligase (824 aa).

Residues 42-52 (PYPSGRIHMGH) carry the 'HIGH' region motif. A 'KMSKS' region motif is present at residues 581–585 (KMSKS). Lys-584 is an ATP binding site.

This sequence belongs to the class-I aminoacyl-tRNA synthetase family.

It is found in the cytoplasm. The enzyme catalyses tRNA(Leu) + L-leucine + ATP = L-leucyl-tRNA(Leu) + AMP + diphosphate. This chain is Leucine--tRNA ligase, found in Geotalea uraniireducens (strain Rf4) (Geobacter uraniireducens).